The primary structure comprises 1657 residues: Ras GTPase-activating-like protein IQGAP1 (1657 aa).

S2 is modified (N-acetylserine). A Phosphoserine modification is found at S2. The 116-residue stretch at 44-159 (LCHLEEAKRW…YCIHALSLYL (116 aa)) folds into the Calponin-homology (CH) domain. Residue Y172 is modified to Phosphotyrosine. Position 330 is a phosphoserine (S330). One can recognise a WW domain in the interval 679–712 (GDNNSKWVKHWVKGGYYYYHNLETQEGGWDEPPN). IQ domains follow at residues 745-774 (NEGL…FLKK), 775-804 (QIPA…YLRS), 805-834 (HKDE…YFRD), and 835-864 (HIND…AEDP). The segment at 956–1274 (GGLKALSKEK…FFQTACDVPE (319 aa)) is C1. The 250-residue stretch at 1020–1269 (YLLLRLFKTA…QKFRRFFQTA (250 aa)) folds into the Ras-GAP domain. Residues 1276-1657 (QDKFNVDEYS…FLLNKKFYGK (382 aa)) are C2. A disordered region spans residues 1410 to 1448 (TPATSEQEAEHQRAMQRRAIRDAKTPDKMKKSKSVKEDS). Basic and acidic residues predominate over residues 1417 to 1448 (EAEHQRAMQRRAIRDAKTPDKMKKSKSVKEDS). At S1441 the chain carries Phosphoserine; by PKC. S1443 carries the post-translational modification Phosphoserine; by PKC/PRKCE.

Interacts with CDC42; the interaction is demonstrated with IQGAP1 in GTP-bound and in nucleotide-free state. Interacts with RAC1. Does not interact with RHOA. Interacts with TSG101. Interacts with PAK6. Interacts with TMEM14B; this interaction increases IQGAP1 phosphorylation and induces its nuclear translocation. Interacts with SASH1. Interacts with PJVK. Interacts with SLC26A4; this interaction enhances the chloride-bicarbonate exchange activity of SLC26A4. Interacts with SVEP1. Interacts with ILK; the interaction is required for localization of IQGAP to the cell cortex. As to quaternary structure, (Microbial infection) Interacts with ebolavirus vp40. In terms of assembly, (Microbial infection) Interacts with human cytomegalovirus protein UL5. (Microbial infection) Interacts with C.jejuni invasion antigen D (CiaD). Post-translationally, phosphorylation of Ser-1443 by PKC/PRKCE prevents interaction between C1 and C2, allowing binding of nucleotide-free CDC42. Ser-1443 phosphorylation enhances the ability to promote neurite outgrowth. In terms of tissue distribution, expressed in the placenta, lung, and kidney. A lower level expression is seen in the heart, liver, skeletal muscle and pancreas.

Its subcellular location is the cell membrane. The protein resides in the nucleus. It localises to the cytoplasm. The protein localises to the cell cortex. It is found in the apical cell membrane. Its subcellular location is the basolateral cell membrane. Plays a crucial role in regulating the dynamics and assembly of the actin cytoskeleton. Recruited to the cell cortex by interaction with ILK which allows it to cooperate with its effector DIAPH1 to locally stabilize microtubules and allow stable insertion of caveolae into the plasma membrane. Binds to activated CDC42 but does not stimulate its GTPase activity. Associates with calmodulin. May promote neurite outgrowth. May play a possible role in cell cycle regulation by contributing to cell cycle progression after DNA replication arrest. This chain is Ras GTPase-activating-like protein IQGAP1 (IQGAP1), found in Homo sapiens (Human).